The following is a 118-amino-acid chain: Large ribosomal subunit protein uL18 (118 aa).

Belongs to the universal ribosomal protein uL18 family. As to quaternary structure, part of the 50S ribosomal subunit; part of the 5S rRNA/L5/L18/L25 subcomplex. Contacts the 5S and 23S rRNAs.

This is one of the proteins that bind and probably mediate the attachment of the 5S RNA into the large ribosomal subunit, where it forms part of the central protuberance. This chain is Large ribosomal subunit protein uL18, found in Rickettsia felis (strain ATCC VR-1525 / URRWXCal2) (Rickettsia azadi).